A 197-amino-acid chain; its full sequence is MDIEMIEVILLAIALAMDAFAVSIGLGAKSQKQSSAYVLRLAVYAALYFGIAQGVMPLIGYLLGAVLLGWLATAAPWLGGGILILLGAKMLYEAFNGEIEAVLEDSFDRNMQEKINHRMMFTLAIATSIDAMAAGFTLNLLALNAWLACSIIAIVTAGFGFFGIYLGKSSGTWLEDKAEILGGLVLIAIGIKVMFIR.

A run of 6 helical transmembrane segments spans residues 8–28 (VILL…GLGA), 43–63 (VYAA…GYLL), 66–86 (VLLG…LILL), 123–143 (LAIA…LLAL), 146–166 (WLAC…GIYL), and 176–196 (DKAE…VMFI).

Belongs to the MntP (TC 9.B.29) family.

The protein resides in the cell inner membrane. Its function is as follows. Probably functions as a manganese efflux pump. This chain is Putative manganese efflux pump MntP 1, found in Psychrobacter cryohalolentis (strain ATCC BAA-1226 / DSM 17306 / VKM B-2378 / K5).